We begin with the raw amino-acid sequence, 860 residues long: Leucine--tRNA ligase (860 aa).

The 'HIGH' region motif lies at P42 to H52. The 'KMSKS' region motif lies at K619–S623. ATP is bound at residue K622.

The protein belongs to the class-I aminoacyl-tRNA synthetase family.

The protein localises to the cytoplasm. It carries out the reaction tRNA(Leu) + L-leucine + ATP = L-leucyl-tRNA(Leu) + AMP + diphosphate. This is Leucine--tRNA ligase from Salmonella paratyphi B (strain ATCC BAA-1250 / SPB7).